Here is a 223-residue protein sequence, read N- to C-terminus: MDTAVVYADLHLARTGEPKREPPPSLSPDTCQCPRWHRLALKLGCACLILLVLSVIGLGVLVLTLLQKPLIQNSPADVQENRTKTTDSPAKLKCPKDWHSHQDKCFHVSQTSITWKGSLADCGGKGATLLLVQDQEELRFLRNLTKRISSSFWIGLSYTLSDEKWKWINGSTLNSDALNITGDTEKDSCASVSQDKVLSESCDSDNIWICQKELKRESTCNDS.

Topologically, residues 1-45 are cytoplasmic; it reads MDTAVVYADLHLARTGEPKREPPPSLSPDTCQCPRWHRLALKLGC. The short motif at 5-10 is the ITIM motif element; it reads VVYADL. An LCK-binding motif motif is present at residues 31–34; the sequence is CQCP. The chain crosses the membrane as a helical; Signal-anchor for type II membrane protein span at residues 46-66; that stretch reads ACLILLVLSVIGLGVLVLTLL. Residues 67-223 lie on the Extracellular side of the membrane; sequence QKPLIQNSPA…LKRESTCNDS (157 aa). One can recognise a C-type lectin domain in the interval 101-211; it reads HQDKCFHVSQ…CDSDNIWICQ (111 aa). Disulfide bonds link cysteine 122–cysteine 210 and cysteine 189–cysteine 202.

In terms of assembly, homodimer; disulfide-linked. Interacts with tyrosine kinase LCK. Binds PTPN6/SHP-1 in a phosphorylation-dependent manner. As to expression, expressed in a subset of natural killer cells.

It is found in the membrane. Its function is as follows. Receptor for CLEC2D/OCIL. Ligand-binding contributes to inhibition of cytotoxic natural killer (NK) cells. May mediate MHC class I-independent 'missing-self' recognition of allografts, tumor cells and virus-infected cells. The protein is Killer cell lectin-like receptor subfamily B member 1B allele A of Rattus norvegicus (Rat).